A 340-amino-acid polypeptide reads, in one-letter code: Probable glucan endo-1,3-beta-glucosidase BG1 (340 aa).

The signal sequence occupies residues M1–G25. E120 (proton donor) is an active-site residue. The active-site Nucleophile is E262.

Belongs to the glycosyl hydrolase 17 family.

The protein resides in the secreted. It catalyses the reaction Hydrolysis of (1-&gt;3)-beta-D-glucosidic linkages in (1-&gt;3)-beta-D-glucans.. Its function is as follows. May play a role in plant defense against pathogens. The protein is Probable glucan endo-1,3-beta-glucosidase BG1 of Arabidopsis thaliana (Mouse-ear cress).